A 367-amino-acid chain; its full sequence is Splicing factor U2AF-associated protein 2 (367 aa).

Positions 36-104 (YDPNSLKMNK…SKSENSEASP (69 aa)) are disordered. Residues 61–78 (TEGKESSNGEDRHTKRLY) show a composition bias toward basic and acidic residues. 2 RRM domains span residues 112–193 (VYIQ…KMRV) and 268–329 (LLID…VVEA).

It belongs to the HTATSF1 family. In terms of assembly, interacts with the U2AF large and U2AF small subunits.

In terms of biological role, has a role in pre-mRNA splicing. This chain is Splicing factor U2AF-associated protein 2 (uap2), found in Schizosaccharomyces pombe (strain 972 / ATCC 24843) (Fission yeast).